The chain runs to 145 residues: Cytochrome c550 (145 aa).

A signal peptide spans 1–24 (MNKNNVLRGLLVLAGLSLSSLALA). The Cytochrome c domain maps to 60 to 142 (LAVEIGASAY…AIRSYLESVH (83 aa)). Heme c contacts are provided by C73, C76, H77, and M119.

In terms of assembly, monomer. Interacts with the quinoprotein ethanol dehydrogenase (QEDH) ExaA. Post-translationally, binds 1 heme group per subunit.

The protein localises to the periplasm. It functions in the pathway alcohol metabolism; ethanol degradation; acetate from ethanol. Functionally, is an essential component of the ethanol oxidation system that allows P.aeruginosa to grow on ethanol as the sole carbon and energy source. Is the direct electron acceptor of the quinoprotein ethanol dehydrogenase (QEDH). This Pseudomonas aeruginosa (strain ATCC 15692 / DSM 22644 / CIP 104116 / JCM 14847 / LMG 12228 / 1C / PRS 101 / PAO1) protein is Cytochrome c550.